The chain runs to 227 residues: DNA repair protein RecO (227 aa).

Belongs to the RecO family.

In terms of biological role, involved in DNA repair and RecF pathway recombination. In Pseudomonas entomophila (strain L48), this protein is DNA repair protein RecO.